The primary structure comprises 689 residues: Transcription factor MYC2 (689 aa).

The segment at 94-172 (LQQRLQALID…VLRELNSLIS (79 aa)) is JAZ-interaction domain. Over residues 316 to 349 (NTVQTNSVPSSNSNKQIAYGNENNHPSGNGQSCY) the composition is skewed to polar residues. 2 disordered regions span residues 316 to 361 (NTVQ…PQQQ) and 420 to 519 (QSQF…EAER). Low complexity predominate over residues 350–361 (NQQQQKNPPQQQ). Residues 471–495 (DSEHSDLEASVVKEADSSRVVEPEK) show a composition bias toward basic and acidic residues. The span at 496 to 505 (RPRKRGRKPA) shows a compositional bias: basic residues. Over residues 506–519 (NGREEPLNHVEAER) the composition is skewed to basic and acidic residues. Positions 509 to 522 (EEPLNHVEAERQRR) are basic motif; degenerate. A bHLH domain is found at 509 to 558 (EEPLNHVEAERQRREKLNQRFYALRAVVPNVSKMDKASLLGDAISYINEL). Residues 523–558 (EKLNQRFYALRAVVPNVSKMDKASLLGDAISYINEL) are helix-loop-helix motif. Residues 563–602 (QNTESDKEDLKSQIEDLKKESRRPGPPPPPNQDLKMSSHT) are disordered. Positions 566-585 (ESDKEDLKSQIEDLKKESRR) are enriched in basic and acidic residues.

In terms of assembly, interacts (via N-terminus) with MED25. Interacts (via N-terminus) with JAZ7. MED25 and JAZ7 compete with each other to bind to MYC2. Interacts (via N-terminus) with MTB1. MTB1 and MED25 compete with each other to bind to MYC2. Expressed at low levels in roots, stems, leaves, flowers and fruits.

It is found in the nucleus. Transcriptional activator that binds to the G-box motif (5'-AACGTG-3') found in the promoter of the jasmonate-induced gene LAPA1. Acts as a negative regulator of blue light-mediated photomorphogenesis and positively regulates root growth. Promotes growth in response to the phytohormones abscisic acid (ABA) and jasmonate (JA). Binds to the G-box motif (5'-CACGTG-3') of the RBCS-3A gene promoter. Acts downstream of the jasmonate (JA) receptor to orchestrate JA-mediated activation of plant responses. Positively regulates both wound-responsive and pathogen-responsive genes through MYC2-targeted transcription factors (MTFs) involved in early response to JA. With JA2L forms a transcription module that regulates wounding-responsive genes. With ERF.C3 forms a transcription module that regulates pathogen-responsive genes. Plays a critical role in orchestrating JA-mediated defense gene expression during Botrytis cinerea infection. Negatively regulates defense responses to root-knot nematodes, potentially by mediating crosstalk among the hormones strigolactones, abscisic acid (ABA) and jasmonate (JA). Regulates the termination of JA-mediated defense responses by specifically binding the G-box (5'-CACATG-3') motifs in the promoters of MTB1, MTB2 and MTB3, which are transcription factors that negatively regulates JA signaling. May be involved in JA-induced chilling tolerance, possibly by ameliorating the antioxidant enzyme system of fruit and increasing proline and lycopene levels. This Solanum lycopersicum (Tomato) protein is Transcription factor MYC2.